Here is a 266-residue protein sequence, read N- to C-terminus: Putative carbamate hydrolase RutD (266 aa).

Residues 14-119 (PVVVLSAGLG…LVNGWLSLSP (106 aa)) form the AB hydrolase-1 domain.

The protein belongs to the AB hydrolase superfamily. Hydrolase RutD family.

The catalysed reaction is carbamate + 2 H(+) = NH4(+) + CO2. Functionally, involved in pyrimidine catabolism. May facilitate the hydrolysis of carbamate, a reaction that can also occur spontaneously. In Klebsiella pneumoniae subsp. pneumoniae (strain ATCC 700721 / MGH 78578), this protein is Putative carbamate hydrolase RutD.